Here is a 427-residue protein sequence, read N- to C-terminus: Phosphatidylserine decarboxylase proenzyme 1, mitochondrial (427 aa).

A mitochondrion-targeting transit peptide spans 1–77 (MRSYLRFSDR…RRFVYKLDQA (77 aa)). Residues 78–88 (VTAALGPNGRY) are Mitochondrial matrix-facing. The helical transmembrane segment at 89-107 (IAMVGMTASAVLLTFHYKF) threads the bilayer. The Mitochondrial intermembrane segment spans residues 108–427 (REVIAATDNV…TEDERLFAFY (320 aa)). Active-site charge relay system; for autoendoproteolytic cleavage activity residues include Asp210, His268, and Ser379. The Schiff-base intermediate with substrate; via pyruvic acid; for decarboxylase activity role is filled by Ser379. Ser379 is subject to Pyruvic acid (Ser); by autocatalysis.

Belongs to the phosphatidylserine decarboxylase family. PSD-B subfamily. Eukaryotic type I sub-subfamily. As to quaternary structure, heterodimer of a large membrane-associated beta subunit and a small pyruvoyl-containing alpha subunit. It depends on pyruvate as a cofactor. In terms of processing, is synthesized initially as an inactive proenzyme. Formation of the active enzyme involves a self-maturation process in which the active site pyruvoyl group is generated from an internal serine residue via an autocatalytic post-translational modification. Two non-identical subunits are generated from the proenzyme in this reaction, and the pyruvate is formed at the N-terminus of the alpha chain, which is derived from the carboxyl end of the proenzyme. The autoendoproteolytic cleavage occurs by a canonical serine protease mechanism, in which the side chain hydroxyl group of the serine supplies its oxygen atom to form the C-terminus of the beta chain, while the remainder of the serine residue undergoes an oxidative deamination to produce ammonia and the pyruvoyl prosthetic group on the alpha chain. During this reaction, the Ser that is part of the protease active site of the proenzyme becomes the pyruvoyl prosthetic group, which constitutes an essential element of the active site of the mature decarboxylase.

The protein resides in the mitochondrion. The protein localises to the mitochondrion inner membrane. The enzyme catalyses a 1,2-diacyl-sn-glycero-3-phospho-L-serine + H(+) = a 1,2-diacyl-sn-glycero-3-phosphoethanolamine + CO2. The protein operates within phospholipid metabolism; phosphatidylethanolamine biosynthesis; phosphatidylethanolamine from CDP-diacylglycerol: step 2/2. Functionally, catalyzes the formation of phosphatidylethanolamine (PtdEtn) from phosphatidylserine (PtdSer). Plays a central role in phospholipid metabolism and in the interorganelle trafficking of phosphatidylserine. The chain is Phosphatidylserine decarboxylase proenzyme 1, mitochondrial from Toxoplasma gondii (strain ATCC 50853 / GT1).